A 595-amino-acid chain; its full sequence is UvrABC system protein C (595 aa).

In terms of domain architecture, GIY-YIG spans 14 to 91 (SNPGCYLHKD…IQENMPKFNI (78 aa)). In terms of domain architecture, UVR spans 196–231 (DKIVNQLKAKMKDMSDQMAFERAAEYRDLIEAVSTL).

Belongs to the UvrC family. In terms of assembly, interacts with UvrB in an incision complex.

Its subcellular location is the cytoplasm. Its function is as follows. The UvrABC repair system catalyzes the recognition and processing of DNA lesions. UvrC both incises the 5' and 3' sides of the lesion. The N-terminal half is responsible for the 3' incision and the C-terminal half is responsible for the 5' incision. In Streptococcus thermophilus (strain ATCC BAA-491 / LMD-9), this protein is UvrABC system protein C.